The sequence spans 305 residues: tRNA dimethylallyltransferase 1 (305 aa).

10 to 17 (GPTASGKT) contacts ATP. 12 to 17 (TASGKT) provides a ligand contact to substrate. Residues 35–38 (DSRQ) form an interaction with substrate tRNA region.

It belongs to the IPP transferase family. Monomer. It depends on Mg(2+) as a cofactor.

It carries out the reaction adenosine(37) in tRNA + dimethylallyl diphosphate = N(6)-dimethylallyladenosine(37) in tRNA + diphosphate. In terms of biological role, catalyzes the transfer of a dimethylallyl group onto the adenine at position 37 in tRNAs that read codons beginning with uridine, leading to the formation of N6-(dimethylallyl)adenosine (i(6)A). This Syntrophus aciditrophicus (strain SB) protein is tRNA dimethylallyltransferase 1.